Consider the following 264-residue polypeptide: MNVHVSPDSLVIAGKTYGSRLLTGTGKFKDLEETRLATEAAGAQIVTVAIRRTNIGQNPGEPNLLDVLPPERYTILPNTAGCYTAEDAVRTCRLARELLDGHNLTKLEVLGDQKSLYPDVVQTLKAAEQLVKDGFEVMVYTSDDPILAKRLEEIGCAAVMPLAAPIGSGLGIQNKYNLLQIIEDAKVPIIVDAGVGTASDAAIAMELGCDGVLMNTAIAGARHPVLMASAMRKAVEAGREAFLAGRIPRKRYASASSPVDGLIG.

The Schiff-base intermediate with DXP role is filled by lysine 106. 1-deoxy-D-xylulose 5-phosphate is bound by residues glycine 167, 193 to 194, and 215 to 216; these read AG and NT.

Belongs to the ThiG family. In terms of assembly, homotetramer. Forms heterodimers with either ThiH or ThiS.

It localises to the cytoplasm. It carries out the reaction [ThiS sulfur-carrier protein]-C-terminal-Gly-aminoethanethioate + 2-iminoacetate + 1-deoxy-D-xylulose 5-phosphate = [ThiS sulfur-carrier protein]-C-terminal Gly-Gly + 2-[(2R,5Z)-2-carboxy-4-methylthiazol-5(2H)-ylidene]ethyl phosphate + 2 H2O + H(+). Its pathway is cofactor biosynthesis; thiamine diphosphate biosynthesis. Its function is as follows. Catalyzes the rearrangement of 1-deoxy-D-xylulose 5-phosphate (DXP) to produce the thiazole phosphate moiety of thiamine. Sulfur is provided by the thiocarboxylate moiety of the carrier protein ThiS. In vitro, sulfur can be provided by H(2)S. The protein is Thiazole synthase of Stenotrophomonas maltophilia (strain K279a).